The primary structure comprises 218 residues: Uracil-DNA glycosylase (218 aa).

Asp-60 functions as the Proton acceptor in the catalytic mechanism.

Belongs to the uracil-DNA glycosylase (UDG) superfamily. UNG family.

It localises to the cytoplasm. The catalysed reaction is Hydrolyzes single-stranded DNA or mismatched double-stranded DNA and polynucleotides, releasing free uracil.. Functionally, excises uracil residues from the DNA which can arise as a result of misincorporation of dUMP residues by DNA polymerase or due to deamination of cytosine. The sequence is that of Uracil-DNA glycosylase from Shewanella oneidensis (strain ATCC 700550 / JCM 31522 / CIP 106686 / LMG 19005 / NCIMB 14063 / MR-1).